We begin with the raw amino-acid sequence, 365 residues long: MEIKWLHLKSFRNYQDQEVDFRPGLTILQGENGQGKTNILEGIYYLLTGKSYRVHREQELARWGENEFHLYGDFIVQRRKLRLESHYQDKRKIIKINQIPCRKLSEYVGTINVVFFSPDDLVMVKGGPAERRRFLDLHIAQHHSKHIQLLNAYNKVLQQKNALLKQGQGGSKSQIAQIELWNEQILRIGSEIIRNRWEFTGLLSRKGQEIYGQISSGKEELTMDYHALGKNNLEEALAAFPKLLAEKMSLEMERKMVLIGPHRDDILFKLNERSARLYGSQGQQRSIVLSTKLAELEVIRQEKGDYPLLLLDDVLSELDRFRRDYLLDYTKSLQQTIMTMTSAETLTQRASLLLKVEKGQIGRIE.

Residue glycine 30 to threonine 37 participates in ATP binding.

This sequence belongs to the RecF family.

The protein resides in the cytoplasm. Functionally, the RecF protein is involved in DNA metabolism; it is required for DNA replication and normal SOS inducibility. RecF binds preferentially to single-stranded, linear DNA. It also seems to bind ATP. The chain is DNA replication and repair protein RecF from Desulfitobacterium hafniense (strain DSM 10664 / DCB-2).